Consider the following 214-residue polypeptide: Thymidylate kinase (214 aa).

7–14 contributes to the ATP binding site; the sequence is GIDGAGKS.

Belongs to the thymidylate kinase family.

The enzyme catalyses dTMP + ATP = dTDP + ADP. Its function is as follows. Phosphorylation of dTMP to form dTDP in both de novo and salvage pathways of dTTP synthesis. In Chlorobaculum tepidum (strain ATCC 49652 / DSM 12025 / NBRC 103806 / TLS) (Chlorobium tepidum), this protein is Thymidylate kinase.